We begin with the raw amino-acid sequence, 494 residues long: Aspartyl/glutamyl-tRNA(Asn/Gln) amidotransferase subunit B (494 aa).

It belongs to the GatB/GatE family. GatB subfamily. In terms of assembly, heterotrimer of A, B and C subunits.

The enzyme catalyses L-glutamyl-tRNA(Gln) + L-glutamine + ATP + H2O = L-glutaminyl-tRNA(Gln) + L-glutamate + ADP + phosphate + H(+). The catalysed reaction is L-aspartyl-tRNA(Asn) + L-glutamine + ATP + H2O = L-asparaginyl-tRNA(Asn) + L-glutamate + ADP + phosphate + 2 H(+). Its function is as follows. Allows the formation of correctly charged Asn-tRNA(Asn) or Gln-tRNA(Gln) through the transamidation of misacylated Asp-tRNA(Asn) or Glu-tRNA(Gln) in organisms which lack either or both of asparaginyl-tRNA or glutaminyl-tRNA synthetases. The reaction takes place in the presence of glutamine and ATP through an activated phospho-Asp-tRNA(Asn) or phospho-Glu-tRNA(Gln). The chain is Aspartyl/glutamyl-tRNA(Asn/Gln) amidotransferase subunit B from Rhodopseudomonas palustris (strain BisB18).